A 399-amino-acid polypeptide reads, in one-letter code: Elongation factor Tu (399 aa).

One can recognise a tr-type G domain in the interval 10 to 209; the sequence is KPHVNIGTIG…AVDEYIPTPE (200 aa). The segment at 19 to 26 is G1; sequence GHVDHGKT. 19-26 contacts GTP; sequence GHVDHGKT. Thr-26 contacts Mg(2+). The segment at 60–64 is G2; that stretch reads GITIA. The G3 stretch occupies residues 81-84; it reads DCPG. GTP-binding positions include 81–85 and 136–139; these read DCPGH and NKED. Residues 136–139 are G4; the sequence is NKED. The G5 stretch occupies residues 174–176; sequence SAL.

It belongs to the TRAFAC class translation factor GTPase superfamily. Classic translation factor GTPase family. EF-Tu/EF-1A subfamily. Monomer.

It is found in the cytoplasm. The enzyme catalyses GTP + H2O = GDP + phosphate + H(+). GTP hydrolase that promotes the GTP-dependent binding of aminoacyl-tRNA to the A-site of ribosomes during protein biosynthesis. The protein is Elongation factor Tu of Nitratiruptor sp. (strain SB155-2).